Reading from the N-terminus, the 254-residue chain is Thiazole synthase (254 aa).

Lys95 (schiff-base intermediate with DXP) is an active-site residue. 1-deoxy-D-xylulose 5-phosphate contacts are provided by residues Gly156, 182–183 (AG), and 204–205 (NT).

It belongs to the ThiG family. In terms of assembly, homotetramer. Forms heterodimers with either ThiH or ThiS.

It is found in the cytoplasm. The catalysed reaction is [ThiS sulfur-carrier protein]-C-terminal-Gly-aminoethanethioate + 2-iminoacetate + 1-deoxy-D-xylulose 5-phosphate = [ThiS sulfur-carrier protein]-C-terminal Gly-Gly + 2-[(2R,5Z)-2-carboxy-4-methylthiazol-5(2H)-ylidene]ethyl phosphate + 2 H2O + H(+). Its pathway is cofactor biosynthesis; thiamine diphosphate biosynthesis. Its function is as follows. Catalyzes the rearrangement of 1-deoxy-D-xylulose 5-phosphate (DXP) to produce the thiazole phosphate moiety of thiamine. Sulfur is provided by the thiocarboxylate moiety of the carrier protein ThiS. In vitro, sulfur can be provided by H(2)S. In Shewanella oneidensis (strain ATCC 700550 / JCM 31522 / CIP 106686 / LMG 19005 / NCIMB 14063 / MR-1), this protein is Thiazole synthase.